Here is a 276-residue protein sequence, read N- to C-terminus: Radial spoke head protein 9 homolog (276 aa).

It belongs to the flagellar radial spoke RSP9 family. As to quaternary structure, component of the axonemal radial spoke 1 (RS1) and 2 (RS2) complexes, at least composed of spoke head proteins RSPH1, RSPH3, RSPH9 and the cilia-specific component RSPH4A or sperm-specific component RSPH6A, spoke stalk proteins RSPH14, DNAJB13, DYDC1, ROPN1L and NME5, and the RS1 complex-specific anchor protein IQUB. Interacts with IQUB. Interacts with RSPH3B. Interacts with RSPH4A. Interacts with RSPH6A. Interacts with CFAP61. Interacts with LRRC23. Expressed in the testis, trachea, lung, oviduct and ependymal cells (at protein level).

The protein localises to the cytoplasm. It localises to the cytoskeleton. It is found in the cilium axoneme. Its subcellular location is the flagellum axoneme. The protein resides in the cell projection. The protein localises to the kinocilium. In terms of biological role, functions as part of axonemal radial spoke complexes that play an important part in the motility of sperm and cilia. Essential for both the radial spoke head assembly and the central pair microtubule stability in ependymal motile cilia. Required for motility of olfactory and neural cilia and for the structural integrity of ciliary axonemes in both 9+0 and 9+2 motile cilia. The chain is Radial spoke head protein 9 homolog (Rsph9) from Mus musculus (Mouse).